The following is a 453-amino-acid chain: Serine--tRNA ligase (453 aa).

252-254 (TAE) contacts L-serine. ATP is bound by residues 283–285 (RKE) and Val-299. Glu-306 contacts L-serine. 370-373 (EMVS) contributes to the ATP binding site. Thr-405 contributes to the L-serine binding site.

Belongs to the class-II aminoacyl-tRNA synthetase family. Type-1 seryl-tRNA synthetase subfamily. Homodimer. The tRNA molecule binds across the dimer.

It localises to the cytoplasm. It carries out the reaction tRNA(Ser) + L-serine + ATP = L-seryl-tRNA(Ser) + AMP + diphosphate + H(+). The enzyme catalyses tRNA(Sec) + L-serine + ATP = L-seryl-tRNA(Sec) + AMP + diphosphate + H(+). The protein operates within aminoacyl-tRNA biosynthesis; selenocysteinyl-tRNA(Sec) biosynthesis; L-seryl-tRNA(Sec) from L-serine and tRNA(Sec): step 1/1. Catalyzes the attachment of serine to tRNA(Ser). Is also able to aminoacylate tRNA(Sec) with serine, to form the misacylated tRNA L-seryl-tRNA(Sec), which will be further converted into selenocysteinyl-tRNA(Sec). This Sulfurisphaera tokodaii (strain DSM 16993 / JCM 10545 / NBRC 100140 / 7) (Sulfolobus tokodaii) protein is Serine--tRNA ligase.